The following is a 123-amino-acid chain: MAISKEDILEAVGSLTVMELNDLVKAFEEKFGVSAAAVAVAGPAGAGAAAAEEQTEFTVMLTGAGDKKVEVIKVVRAATGLGLKEAKDLVDGAPKAVKEGVSKADAEALKAQLEAAGAKVEVK.

This sequence belongs to the bacterial ribosomal protein bL12 family. As to quaternary structure, homodimer. Part of the ribosomal stalk of the 50S ribosomal subunit. Forms a multimeric L10(L12)X complex, where L10 forms an elongated spine to which 2 to 4 L12 dimers bind in a sequential fashion. Binds GTP-bound translation factors.

Its function is as follows. Forms part of the ribosomal stalk which helps the ribosome interact with GTP-bound translation factors. Is thus essential for accurate translation. The protein is Large ribosomal subunit protein bL12 of Dechloromonas aromatica (strain RCB).